We begin with the raw amino-acid sequence, 308 residues long: Isochorismatase domain-containing protein 1 (308 aa).

Belongs to the isochorismatase family.

The chain is Isochorismatase domain-containing protein 1 (isoc1) from Xenopus tropicalis (Western clawed frog).